Consider the following 256-residue polypeptide: Pimeloyl-[acyl-carrier protein] methyl ester esterase (256 aa).

The AB hydrolase-1 domain maps to 15-242 (HLVLLHGWGL…AAHAPFISHP (228 aa)). Substrate-binding positions include W22, 82–83 (SL), and 143–147 (FLALQ). The Nucleophile role is filled by S82. Residues D207 and H235 contribute to the active site. H235 is a binding site for substrate.

This sequence belongs to the AB hydrolase superfamily. Carboxylesterase BioH family. In terms of assembly, monomer.

It localises to the cytoplasm. It catalyses the reaction 6-carboxyhexanoyl-[ACP] methyl ester + H2O = 6-carboxyhexanoyl-[ACP] + methanol + H(+). The protein operates within cofactor biosynthesis; biotin biosynthesis. Its function is as follows. The physiological role of BioH is to remove the methyl group introduced by BioC when the pimeloyl moiety is complete. It allows to synthesize pimeloyl-ACP via the fatty acid synthetic pathway through the hydrolysis of the ester bonds of pimeloyl-ACP esters. The polypeptide is Pimeloyl-[acyl-carrier protein] methyl ester esterase (Salmonella choleraesuis (strain SC-B67)).